Here is a 396-residue protein sequence, read N- to C-terminus: Ribose-phosphate pyrophosphokinase 1, chloroplastic (396 aa).

Residues 1–36 (MPLSYSAAAAAAPSPLAARSRGLLRRPPRSSPVVVR) constitute a chloroplast transit peptide. The Mg(2+) site is built by aspartate 204, histidine 206, aspartate 215, and aspartate 219. The binding of phosphoribosylpyrophosphate stretch occupies residues 290 to 305 (GKVAVMMDDMIDTAGT).

This sequence belongs to the ribose-phosphate pyrophosphokinase family. Requires Mg(2+) as cofactor.

It localises to the plastid. The protein localises to the chloroplast. It carries out the reaction D-ribose 5-phosphate + ATP = 5-phospho-alpha-D-ribose 1-diphosphate + AMP + H(+). In Oryza sativa subsp. japonica (Rice), this protein is Ribose-phosphate pyrophosphokinase 1, chloroplastic.